A 553-amino-acid chain; its full sequence is Zinc finger matrin-type protein 1 (553 aa).

The segment at 16-36 (TPSSPAATCSGPMAGGDTSSN) is disordered. Matrin-type zinc fingers lie at residues 61–91 (TFCKVCNAVLQFESHRISHYEGKKHAQKVRL), 125–155 (KFCGLCNMVFSSPVVAQTHYVGKVHAKKMRQ), 223–253 (KYCKLCCASFNKALVAQQHYSGKKHARNQAR), and 275–305 (YVCPICNITLTSIEMYQSHMQGNKHQIKESM). Disordered regions lie at residues 341-402 (QFRQ…DQRV) and 428-553 (HISR…ILGF). Over residues 350-362 (DSCDYEEEEEQEP) the composition is skewed to acidic residues. Positions 431–453 (RSPTSQDSSDNSSGSSSDESSGS) are enriched in low complexity. Over residues 456–476 (KDKRRKRKHHRESRLRGSGRI) the composition is skewed to basic residues. Over residues 477–513 (RRGDENSEKRKRKGEDADSGKEDNKHDRGKTSGGDKD) the composition is skewed to basic and acidic residues.

It localises to the nucleus. This is Zinc finger matrin-type protein 1 (zmat1) from Xenopus tropicalis (Western clawed frog).